A 203-amino-acid chain; its full sequence is Sperm-specific protein PHI-2B/PHI-3 (203 aa).

Residues 1–35 are compositionally biased toward basic residues; sequence MPSPSRKSRSRSRSRSKSPKRSPAKKARKTPKKPR. 2 disordered regions span residues 1–46 and 104–203; these read MPSP…PSTL and KTSA…KSKK. Residues 41-120 enclose the H15 domain; it reads KKPSTLSMIV…GATGSFRVGK (80 aa). 2 stretches are compositionally biased toward basic residues: residues 126 to 140 and 147 to 203; these read KKAK…KSSK and KAKK…KSKK.

PL-II* and PL-IV are produced by post-translational cleavage of a common precursor. In terms of tissue distribution, sperm.

The protein resides in the nucleus. Its subcellular location is the chromosome. In terms of biological role, linker histones are implicated in chromatin remodeling and/or transcriptional regulation during spermiogenesis, the process of spermatid maturation into spermatozoa. Protamines substitute for histones in the chromatin of sperm during the haploid phase of spermatogenesis. They compact sperm DNA into a highly condensed, stable and inactive complex. This chain is Sperm-specific protein PHI-2B/PHI-3, found in Mytilus trossulus (Blue mussel).